The chain runs to 297 residues: 4-hydroxy-tetrahydrodipicolinate synthase (297 aa).

Thr-45 contributes to the pyruvate binding site. Tyr-133 functions as the Proton donor/acceptor in the catalytic mechanism. Lys-161 (schiff-base intermediate with substrate) is an active-site residue. Ile-203 is a binding site for pyruvate.

It belongs to the DapA family. As to quaternary structure, homotetramer; dimer of dimers.

Its subcellular location is the cytoplasm. It catalyses the reaction L-aspartate 4-semialdehyde + pyruvate = (2S,4S)-4-hydroxy-2,3,4,5-tetrahydrodipicolinate + H2O + H(+). The protein operates within amino-acid biosynthesis; L-lysine biosynthesis via DAP pathway; (S)-tetrahydrodipicolinate from L-aspartate: step 3/4. Its function is as follows. Catalyzes the condensation of (S)-aspartate-beta-semialdehyde [(S)-ASA] and pyruvate to 4-hydroxy-tetrahydrodipicolinate (HTPA). The chain is 4-hydroxy-tetrahydrodipicolinate synthase from Buchnera aphidicola subsp. Cinara cedri (strain Cc).